Consider the following 485-residue polypeptide: Ribulose bisphosphate carboxylase large chain (485 aa).

Substrate contacts are provided by Asn124 and Thr174. Lys176 functions as the Proton acceptor in the catalytic mechanism. Lys178 lines the substrate pocket. Mg(2+)-binding residues include Lys202, Asp204, and Glu205. An N6-carboxylysine modification is found at Lys202. His294 acts as the Proton acceptor in catalysis. Substrate contacts are provided by Arg295, His327, and Ser379.

Belongs to the RuBisCO large chain family. Type I subfamily. Heterohexadecamer of 8 large chains and 8 small chains. It depends on Mg(2+) as a cofactor.

The enzyme catalyses 2 (2R)-3-phosphoglycerate + 2 H(+) = D-ribulose 1,5-bisphosphate + CO2 + H2O. It catalyses the reaction D-ribulose 1,5-bisphosphate + O2 = 2-phosphoglycolate + (2R)-3-phosphoglycerate + 2 H(+). Its function is as follows. RuBisCO catalyzes two reactions: the carboxylation of D-ribulose 1,5-bisphosphate, the primary event in carbon dioxide fixation, as well as the oxidative fragmentation of the pentose substrate. Both reactions occur simultaneously and in competition at the same active site. The protein is Ribulose bisphosphate carboxylase large chain of Rhodopseudomonas palustris (strain BisA53).